Consider the following 153-residue polypeptide: Endoribonuclease YbeY (153 aa).

His-116, His-120, and His-126 together coordinate Zn(2+).

The protein belongs to the endoribonuclease YbeY family. The cofactor is Zn(2+).

Its subcellular location is the cytoplasm. Its function is as follows. Single strand-specific metallo-endoribonuclease involved in late-stage 70S ribosome quality control and in maturation of the 3' terminus of the 16S rRNA. The chain is Endoribonuclease YbeY from Leifsonia xyli subsp. xyli (strain CTCB07).